A 146-amino-acid polypeptide reads, in one-letter code: MRNEMNLQFSALSQNESFARVTVAAFIAQLDPTMEELTEIKTVVSEAVTNAIIHGYEGNAEGIVYISVILEEAMVKLTIRDEGIGIFNLDEARQPLFTTKPELERSGMGFTIMENFMDEVEVISNESFGTTIHLTKYLSNSNALCN.

The protein belongs to the anti-sigma-factor family.

The enzyme catalyses L-seryl-[protein] + ATP = O-phospho-L-seryl-[protein] + ADP + H(+). It catalyses the reaction L-threonyl-[protein] + ATP = O-phospho-L-threonyl-[protein] + ADP + H(+). In terms of biological role, binds to sigma F and blocks its ability to form an RNA polymerase holoenzyme (E-sigma F). Phosphorylates SpoIIAA on a serine residue. This phosphorylation may enable SpoIIAA to act as an anti-anti-sigma factor that counteracts SpoIIAB and thus releases sigma F from inhibition. The protein is Anti-sigma F factor of Bacillus cereus (strain G9842).